The sequence spans 93 residues: Pyrimidine/purine nucleoside phosphorylase (93 aa).

Belongs to the nucleoside phosphorylase PpnP family.

The catalysed reaction is a purine D-ribonucleoside + phosphate = a purine nucleobase + alpha-D-ribose 1-phosphate. The enzyme catalyses adenosine + phosphate = alpha-D-ribose 1-phosphate + adenine. It catalyses the reaction cytidine + phosphate = cytosine + alpha-D-ribose 1-phosphate. It carries out the reaction guanosine + phosphate = alpha-D-ribose 1-phosphate + guanine. The catalysed reaction is inosine + phosphate = alpha-D-ribose 1-phosphate + hypoxanthine. The enzyme catalyses thymidine + phosphate = 2-deoxy-alpha-D-ribose 1-phosphate + thymine. It catalyses the reaction uridine + phosphate = alpha-D-ribose 1-phosphate + uracil. It carries out the reaction xanthosine + phosphate = alpha-D-ribose 1-phosphate + xanthine. Catalyzes the phosphorolysis of diverse nucleosides, yielding D-ribose 1-phosphate and the respective free bases. Can use uridine, adenosine, guanosine, cytidine, thymidine, inosine and xanthosine as substrates. Also catalyzes the reverse reactions. This is Pyrimidine/purine nucleoside phosphorylase from Pseudomonas syringae pv. tomato (strain ATCC BAA-871 / DC3000).